The primary structure comprises 479 residues: Probable phosphatidate cytidylyltransferase (479 aa).

A compositionally biased stretch (basic and acidic residues) spans 1–28 (MRTDNIRNRKEQLKKQEKKDFDSSKDEE). A disordered region spans residues 1-71 (MRTDNIRNRK…NNNNNNNNIK (71 aa)). Topologically, residues 1–108 (MRTDNIRNRK…LAIRSVMGAF (108 aa)) are cytoplasmic. The segment covering 53-69 (NKNIINQKTNNNNNNNN) has biased composition (low complexity). A helical membrane pass occupies residues 109-129 (MIGFFTIVLSTDHFIVALFVI). Residues 130–159 (ALQLLVFKEMIALRYIEAKEKKIPHFRTLN) are Extracellular-facing. Residues 160 to 180 (WFFLFTSFFFFYAKPILITLA) form a helical membrane-spanning segment. The Cytoplasmic segment spans residues 181–192 (NYYPDIFQHFVR). The helical transmembrane segment at 193 to 213 (YHLWHSFSLYCIGFVLFILTL) threads the bilayer. Residues 214 to 240 (RKGVYRYQFSQLTWTLMILMMVVVQSN) lie on the Extracellular side of the membrane. The helical transmembrane segment at 241 to 261 (FLISNIYQGLIWFILPVSIIV) threads the bilayer. Residues 262-293 (CNDIFAYFNGFFLGKKFINRPLMKISPNKTWE) are Cytoplasmic-facing. A helical transmembrane segment spans residues 294-314 (GFIGATGWTLLFAYYFCGFLL). The Extracellular portion of the chain corresponds to 315–375 (KYDWIVCPKG…FTYIPIQFHA (61 aa)). A helical membrane pass occupies residues 376–396 (LVLALFGSLIAPFGGFFASGI). The Cytoplasmic portion of the chain corresponds to 397-479 (KRAYKVKDFD…IEFTTGTITA (83 aa)).

This sequence belongs to the CDS family.

It is found in the membrane. It carries out the reaction a 1,2-diacyl-sn-glycero-3-phosphate + CTP + H(+) = a CDP-1,2-diacyl-sn-glycerol + diphosphate. It participates in phospholipid metabolism; CDP-diacylglycerol biosynthesis; CDP-diacylglycerol from sn-glycerol 3-phosphate: step 3/3. The protein is Probable phosphatidate cytidylyltransferase (cdsA) of Dictyostelium discoideum (Social amoeba).